Reading from the N-terminus, the 579-residue chain is MDLLPPKPKYNPLRNESLSSLEEGASGSTPPEELPSPSASSLGPILPPLPGDDSPTTLCSFFPRMSNLKLANPAGGRLGPKGEPGKAAEDGEGSAGAALRDSGLLPLLQDMNKLSGGGGRRTRVEGGQLGGEEWTRHGSFVNKPTRGWLHPNDKVMGPGVSYLVRYMGCVEVLQSMRALDFNTRTQVTREAISLVCEAVPGAKGATRRRKPCSRPLSSILGRSNLKFAGMPITLTVSTSSLNLMAADCKQIIANHHMQSISFASGGDPDTAEYVAYVAKDPVNQRACHILECPEGLAQDVISTIGQAFELRFKQYLRNPPKLVTPHDRMAGFDGSAWDEEEEEPPDHQYYNDFPGKEPPLGGVVDMRLREGAARPTLPSAQMSSHLGATLPIGQHAAGDHEVRKQMLPPPPCPGRELFDDPSYVNIQNLDKARQAGGGAGPPNPSLNGSAPRDLFDMKPFEDALRVPPPPQSMSMAEQLQGEPWFHGKLSRREAEALLQLNGDFLVRESTTTPGQYVLTGLQSGQPKHLLLVDPEGVVRTKDHRFESVSHLISYHMDNHLPIISAGSELCLQQPVDRKV.

The residue at position 1 (Met1) is an N-acetylmethionine. The disordered stretch occupies residues 1–137 (MDLLPPKPKY…QLGGEEWTRH (137 aa)). Low complexity predominate over residues 16–44 (ESLSSLEEGASGSTPPEELPSPSASSLGP). Ser36 and Ser139 each carry phosphoserine. Lys154 carries the N6-acetyllysine modification. One can recognise a PID domain in the interval 156 to 339 (MGPGVSYLVR…AGFDGSAWDE (184 aa)). The segment at 337–357 (WDEEEEEPPDHQYYNDFPGKE) is disordered. The CH1 stretch occupies residues 340–483 (EEEEPPDHQY…SMAEQLQGEP (144 aa)). 3 positions are modified to phosphotyrosine: Tyr349, Tyr350, and Tyr423. Residues 432-451 (ARQAGGGAGPPNPSLNGSAP) are disordered. Ser449 bears the Phosphoserine mark. Positions 484-575 (WFHGKLSRRE…GSELCLQQPV (92 aa)) constitute an SH2 domain.

Interacts with CPNE3; this interaction may mediate the binding of CPNE3 with ERBB2. Interacts with the NPXY motif of tyrosine-phosphorylated IGF1R and INSR in vitro via the PID domain. Once activated, binds to GRB2. Interacts with tyrosine-phosphorylated DDR2 and CD3T. Interacts with the N-terminal region of APS. Interacts with GRB7 and KIT. Interacts with PTK2/FAK1. Interacts with phosphorylated LRP1 and IRS4. Interacts with FLT4 (tyrosine-phosphorylated). Interacts with PDGFRB (tyrosine-phosphorylated). Interacts with ERBB4. Interacts with TEK/TIE2 (tyrosine-phosphorylated). Interacts with ALK, GAB2, TRIM31, INPP5D/SHIP1 and INPPL1/SHIP2. Interacts with PTPN6/SHP (tyrosine phosphorylated). Identified in a complex containing FGFR4, NCAM1, CDH2, PLCG1, FRS2, SRC, SHC1, GAP43 and CTTN. Interacts with EPHB1 and GRB2; activates the MAPK/ERK cascade to regulate cell migration. Interacts with the Trk receptors NTRK1, NTRK2 and NTRK3; in a phosphotyrosine-dependent manner. Interacts with CEACAM1; this interaction is CEACAM1-phosphorylation-dependent and mediates interaction with EGFR or INSR resulting in decrease coupling of SHC1 to the MAPK3/ERK1-MAPK1/ERK2 pathway. Interacts (via PID domain) with PEAK1 (when phosphorylated at 'Tyr-1177'). Found in a complex with PPP1CA, PPP1CC, SHC1 and PEAK1. Post-translationally, phosphorylated in response to FLT4 signaling. Tyrosine phosphorylated by ligand-activated PDGFRB. May be tyrosine phosphorylated by activated PTK2/FAK1. Tyrosine phosphorylated by TEK/TIE2. Tyrosine phosphorylated by activated PTK2B/PYK2. Dephosphorylation by PTPN2 may regulate interaction with GRB2. Phosphorylated by activated epidermal growth factor receptor. Phosphorylated in response to KIT signaling. Isoform p47Shc and isoform p52Shc are phosphorylated on tyrosine residues of the Pro-rich domain. Isoform p66Shc is phosphorylated on Ser-36 by PRKCB upon treatment with insulin, hydrogen peroxide or irradiation with ultraviolet light. FLT3 signaling promotes tyrosine phosphorylation of isoform p47Shc and isoform p52Shc. Also tyrosine phosphorylated by ligand-activated ALK. As to expression, widely expressed. Expressed in neural stem cells but absent in mature neurons.

Its subcellular location is the cytoplasm. It localises to the cell junction. It is found in the focal adhesion. The protein localises to the mitochondrion matrix. The protein resides in the mitochondrion. Signaling adapter that couples activated growth factor receptors to signaling pathways. Participates in signaling downstream of the angiopoietin receptor TEK/TIE2, and plays a role in the regulation of endothelial cell migration and sprouting angiogenesis. Participates in a signaling cascade initiated by activated KIT and KITLG/SCF. Isoform p47Shc and isoform p52Shc, once phosphorylated, couple activated receptor kinases to Ras via the recruitment of the GRB2/SOS complex and are implicated in the cytoplasmic propagation of mitogenic signals. Isoform p47Shc and isoform p52 may thus function as initiators of the Ras signaling cascade in various non-neuronal systems. Isoform p66Shc does not mediate Ras activation, but is involved in signal transduction pathways that regulate the cellular response to oxidative stress and life span. Isoform p66Shc acts as a downstream target of the tumor suppressor p53 and is indispensable for the ability of stress-activated p53 to induce elevation of intracellular oxidants, cytochrome c release and apoptosis. The expression of isoform p66Shc has been correlated with life span. In Mus musculus (Mouse), this protein is SHC-transforming protein 1 (Shc1).